The primary structure comprises 131 residues: Large ribosomal subunit protein bL12 (131 aa).

Belongs to the bacterial ribosomal protein bL12 family. As to quaternary structure, homodimer. Part of the ribosomal stalk of the 50S ribosomal subunit. Forms a multimeric L10(L12)X complex, where L10 forms an elongated spine to which 2 to 4 L12 dimers bind in a sequential fashion. Binds GTP-bound translation factors.

Forms part of the ribosomal stalk which helps the ribosome interact with GTP-bound translation factors. Is thus essential for accurate translation. The sequence is that of Large ribosomal subunit protein bL12 from Prochlorococcus marinus (strain MIT 9312).